A 216-amino-acid polypeptide reads, in one-letter code: GTPase IMAP family member GIMD1 (216 aa).

In terms of domain architecture, AIG1-type G spans 5–216 (KMTINLALFG…ENCYQVLTFK (212 aa)). GTP is bound by residues 14 to 22 (GMTQSGKSS), Ser-35, and 147 to 149 (HAE).

It belongs to the TRAFAC class TrmE-Era-EngA-EngB-Septin-like GTPase superfamily. AIG1/Toc34/Toc159-like paraseptin GTPase family. IAN subfamily.

The protein is GTPase IMAP family member GIMD1 (GIMD1) of Bos taurus (Bovine).